We begin with the raw amino-acid sequence, 487 residues long: Probable glycine dehydrogenase (decarboxylating) subunit 2 (487 aa).

K273 bears the N6-(pyridoxal phosphate)lysine mark.

This sequence belongs to the GcvP family. C-terminal subunit subfamily. The glycine cleavage system is composed of four proteins: P, T, L and H. In this organism, the P 'protein' is a heterodimer of two subunits. It depends on pyridoxal 5'-phosphate as a cofactor.

It catalyses the reaction N(6)-[(R)-lipoyl]-L-lysyl-[glycine-cleavage complex H protein] + glycine + H(+) = N(6)-[(R)-S(8)-aminomethyldihydrolipoyl]-L-lysyl-[glycine-cleavage complex H protein] + CO2. The glycine cleavage system catalyzes the degradation of glycine. The P protein binds the alpha-amino group of glycine through its pyridoxal phosphate cofactor; CO(2) is released and the remaining methylamine moiety is then transferred to the lipoamide cofactor of the H protein. The chain is Probable glycine dehydrogenase (decarboxylating) subunit 2 from Lysinibacillus sphaericus (strain C3-41).